Reading from the N-terminus, the 205-residue chain is RNA pyrophosphohydrolase (205 aa).

The region spanning 6–149 (GFRPNVGIVL…KRGVYARALR (144 aa)) is the Nudix hydrolase domain. The Nudix box motif lies at 38 to 59 (GGMNTDETPVEAMYRELREETG). The disordered stretch occupies residues 178–205 (GSSAAGHDRPRKRPRKRGGVLPVRINND). Residues 186 to 195 (RPRKRPRKRG) are compositionally biased toward basic residues.

It belongs to the Nudix hydrolase family. RppH subfamily. A divalent metal cation is required as a cofactor.

Accelerates the degradation of transcripts by removing pyrophosphate from the 5'-end of triphosphorylated RNA, leading to a more labile monophosphorylated state that can stimulate subsequent ribonuclease cleavage. This Xanthomonas campestris pv. campestris (strain 8004) protein is RNA pyrophosphohydrolase.